Reading from the N-terminus, the 207-residue chain is ATP-dependent Clp protease proteolytic subunit (207 aa).

Catalysis depends on Ser-111, which acts as the Nucleophile. Residue His-136 is part of the active site.

The protein belongs to the peptidase S14 family. As to quaternary structure, fourteen ClpP subunits assemble into 2 heptameric rings which stack back to back to give a disk-like structure with a central cavity, resembling the structure of eukaryotic proteasomes. Component of the ClpAP and ClpXP complexes.

Its subcellular location is the cytoplasm. It carries out the reaction Hydrolysis of proteins to small peptides in the presence of ATP and magnesium. alpha-casein is the usual test substrate. In the absence of ATP, only oligopeptides shorter than five residues are hydrolyzed (such as succinyl-Leu-Tyr-|-NHMec, and Leu-Tyr-Leu-|-Tyr-Trp, in which cleavage of the -Tyr-|-Leu- and -Tyr-|-Trp bonds also occurs).. Functionally, cleaves peptides in various proteins in a process that requires ATP hydrolysis. Has a chymotrypsin-like activity. Plays a major role in the degradation of misfolded proteins. The chain is ATP-dependent Clp protease proteolytic subunit from Escherichia coli O139:H28 (strain E24377A / ETEC).